Reading from the N-terminus, the 201-residue chain is Ubiquitin-conjugating enzyme E2 E2 (201 aa).

Basic and acidic residues predominate over residues 1-10; it reads MSTEAQRVDD. Residues 1-55 are disordered; the sequence is MSTEAQRVDDSPSTSGGSSDGDQRESVQQEPDREQVQPKKKEGKISSKTAAKLST. At serine 2 the chain carries N-acetylserine. A phosphoserine mark is found at serine 11, serine 15, serine 18, and serine 19. A compositionally biased stretch (basic and acidic residues) spans 21–45; it reads GDQRESVQQEPDREQVQPKKKEGKI. A compositionally biased stretch (low complexity) spans 46–55; sequence SSKTAAKLST. In terms of domain architecture, UBC core spans 55-201; sequence TSAKRIQKEL…ARQWTKRYAT (147 aa). Cysteine 139 serves as the catalytic Glycyl thioester intermediate.

Belongs to the ubiquitin-conjugating enzyme family. Autoubiquitinated.

The enzyme catalyses S-ubiquitinyl-[E1 ubiquitin-activating enzyme]-L-cysteine + [E2 ubiquitin-conjugating enzyme]-L-cysteine = [E1 ubiquitin-activating enzyme]-L-cysteine + S-ubiquitinyl-[E2 ubiquitin-conjugating enzyme]-L-cysteine.. It functions in the pathway protein modification; protein ubiquitination. Its function is as follows. Accepts ubiquitin from the E1 complex and catalyzes its covalent attachment to other proteins. In vitro catalyzes 'Lys-11'- and 'Lys-48'-, as well as 'Lys-63'-linked polyubiquitination. Catalyzes the ISGylation of influenza A virus NS1 protein. The polypeptide is Ubiquitin-conjugating enzyme E2 E2 (Ube2e2) (Mus musculus (Mouse)).